Here is a 138-residue protein sequence, read N- to C-terminus: Large ribosomal subunit protein bL17 (138 aa).

The protein belongs to the bacterial ribosomal protein bL17 family. In terms of assembly, part of the 50S ribosomal subunit. Contacts protein L32.

The protein is Large ribosomal subunit protein bL17 of Buchnera aphidicola subsp. Schizaphis graminum (strain Sg).